Reading from the N-terminus, the 117-residue chain is Small ribosomal subunit protein bS6 (117 aa).

The protein belongs to the bacterial ribosomal protein bS6 family.

In terms of biological role, binds together with bS18 to 16S ribosomal RNA. The protein is Small ribosomal subunit protein bS6 of Roseobacter denitrificans (strain ATCC 33942 / OCh 114) (Erythrobacter sp. (strain OCh 114)).